Consider the following 238-residue polypeptide: Ribonuclease PH (238 aa).

Phosphate is bound by residues Arg86 and Gly124–Arg126.

This sequence belongs to the RNase PH family. As to quaternary structure, homohexameric ring arranged as a trimer of dimers.

The enzyme catalyses tRNA(n+1) + phosphate = tRNA(n) + a ribonucleoside 5'-diphosphate. Functionally, phosphorolytic 3'-5' exoribonuclease that plays an important role in tRNA 3'-end maturation. Removes nucleotide residues following the 3'-CCA terminus of tRNAs; can also add nucleotides to the ends of RNA molecules by using nucleoside diphosphates as substrates, but this may not be physiologically important. Probably plays a role in initiation of 16S rRNA degradation (leading to ribosome degradation) during starvation. In Acinetobacter baylyi (strain ATCC 33305 / BD413 / ADP1), this protein is Ribonuclease PH.